Reading from the N-terminus, the 146-residue chain is Hemoglobin subunit beta (146 aa).

Residue V1 is modified to N-acetylvaline. In terms of domain architecture, Globin spans 2–146; the sequence is HLTADEKAAV…VANALAHKYH (145 aa). T12 carries the phosphothreonine modification. Position 44 is a phosphoserine (S44). Residue K59 is modified to N6-acetyllysine. H63 is a heme b binding site. K82 carries the post-translational modification N6-acetyllysine. A heme b-binding site is contributed by H92. C93 carries the post-translational modification S-nitrosocysteine. K144 is subject to N6-acetyllysine.

This sequence belongs to the globin family. In terms of assembly, heterotetramer of two alpha chains and two beta chains. Red blood cells.

Involved in oxygen transport from the lung to the various peripheral tissues. This Odobenus rosmarus divergens (Pacific walrus) protein is Hemoglobin subunit beta (HBB).